Here is a 275-residue protein sequence, read N- to C-terminus: Hydroxyethylthiazole kinase (275 aa).

Met57 is a substrate binding site. 2 residues coordinate ATP: Arg132 and Ser178. Substrate is bound at residue Gly205.

The protein belongs to the Thz kinase family. Mg(2+) is required as a cofactor.

The enzyme catalyses 5-(2-hydroxyethyl)-4-methylthiazole + ATP = 4-methyl-5-(2-phosphooxyethyl)-thiazole + ADP + H(+). The protein operates within cofactor biosynthesis; thiamine diphosphate biosynthesis; 4-methyl-5-(2-phosphoethyl)-thiazole from 5-(2-hydroxyethyl)-4-methylthiazole: step 1/1. Its function is as follows. Catalyzes the phosphorylation of the hydroxyl group of 4-methyl-5-beta-hydroxyethylthiazole (THZ). The chain is Hydroxyethylthiazole kinase from Clavibacter sepedonicus (Clavibacter michiganensis subsp. sepedonicus).